A 369-amino-acid polypeptide reads, in one-letter code: RNA-binding protein rnp24 (369 aa).

Disordered stretches follow at residues 1-77, 200-219, and 304-369; these read MEPI…KKKE, TDFSGRPSKPANTLSKTASI, and RMRN…IKFD. The 102-residue stretch at 105-206 folds into the RRM 1 domain; it reads WGIWVGNLSF…KSNTDFSGRP (102 aa). Positions 209–219 are enriched in polar residues; that stretch reads PANTLSKTASI. The RRM 2 domain occupies 228 to 310; sequence SILFVGNLDF…RSKRMRNKSP (83 aa). Basic and acidic residues predominate over residues 325 to 341; sequence QEDKPNFKRARKIDPRS. The span at 346 to 357 shows a compositional bias: low complexity; sequence AALAKAQRSSAA.

Its subcellular location is the nucleus. This Schizosaccharomyces pombe (strain 972 / ATCC 24843) (Fission yeast) protein is RNA-binding protein rnp24 (rnp24).